A 579-amino-acid polypeptide reads, in one-letter code: MYGRTARASELLDNLKGEIDALNHELSLYKHQKDDYERKFQNQLAELNTIQQTLYDLERGQNKMKIHYEEEIRQLKRQLEQQNINASQRDLNSPSTFRSNSPAPPAQHNNNNNNIINNNNNNNNNNNNMQRNTPTPTIPDKGQPKQRQRSGSGEFYQQPGLGPQQLNFQQLNLQQQQQQLQQQQQQGSGQSFPSLSPLDSNRHPKEMGNNMSGNSMSMNNNNNNLNKKPDMEEVKEEDRRRHDTEMSEENGKEKGTDWLVGYNPSVQTNLNIDLLHNLQHNSVVCCVNFSNDGKYLATGCNRSAQIYDVDTGKKVHAFVDESEKDGDLYIRSVCFSPDGNYLATGAEDKTVKVWDIHTKKIQHTFYGHELDIYSLDYSSDGRFIVSGSGDKKAKIWDIEKGKCAFTLGNEEVGPKNGVTSVAMSPDGRLVAAGSLDNIVRLWDAQTGYFLERYEGHLDSVYSVAFSPDGKSLASGSLDKSLKLWDLSGSRSRSRCRATFNGHKDFVLSVAFSPDGSWLISGSKDRSVQFWDPRNGTTHMMLQGHKNSVISVALSPKNNSHGVFATGSGDFRSRLWKYDS.

Polar residues predominate over residues 83 to 101 (NINASQRDLNSPSTFRSNS). Residues 83–258 (NINASQRDLN…ENGKEKGTDW (176 aa)) form a disordered region. Low complexity-rich tracts occupy residues 109–128 (NNNN…NNNN), 157–198 (QQPG…LSPL), and 207–224 (MGNN…NNNN). The span at 227-256 (KKPDMEEVKEEDRRRHDTEMSEENGKEKGT) shows a compositional bias: basic and acidic residues. WD repeat units follow at residues 279-319 (QHNS…HAFV), 325-364 (DGDL…IQHT), 367-406 (GHEL…CAFT), 413-452 (GPKN…FLER), 455-494 (GHLD…SRSR), 501-540 (GHKD…THMM), and 543-579 (GHKN…KYDS).

Belongs to the WD repeat TUP1 family. Associates with trfA to form the trfA-tupA corepressor complex.

It localises to the nucleus. In terms of biological role, acts as a component of the trfA-tupA corepressor complex which is involved in the repression of many genes in a wide variety of physiological processes. May also be involved in the derepression of at least some target genes. The complex is recruited to target genes by interaction with DNA-bound transcriptional repressors. The complex recruits histone deacetylases to produce a repressive chromatin structure, interacts with hypoacetylated N-terminal tails of histones H3 and H4 that have been programmed for repression by the action of histone deacetylases and interferes directly with the transcriptional machinery by associating with the RNA polymerase II mediator complex. The sequence is that of General transcriptional corepressor tupA (tupA) from Dictyostelium discoideum (Social amoeba).